The sequence spans 532 residues: MIARLAGRIILLNGWRRALAAFLSGAFATLTQPPFDIFVAGFVSFPVLVWLIDGAIARTDAGPLRRLLLAAKVGWWFGFGYFVSGLWWIGTALLVDADQFAWALPLAVLGLPAFLALFYAFAAMIARLLWSDGLGRILAFAFGFALAEWLRTFIFTGFPWNLIGYAAMPVPLLMQSVAVIGLVGMSALAVFVFAAPALLTGGHFARTGIGLAIFLALAHVGFGAWTLSRAPAIVDENGPLAVRIVQPSIAQAMKWDNAERRAIFDKLVGLTEEAPAEGKPRPDVIVWPETAIPYILESTPQALAHIGDALQEGQVLLAGAVREEKGADGGEPRYYNSIYTIDDRGRIVSTADKVHLVPFGEYLPFESFLRGLGLQEVVEMPGGFTAGTTRHALAVKDGRSFLPLICYEAIFPDELGYEGAGASAIINVTNDAWYGDTPGPYQHFRQAQVRAVEQGLPLIRAANNGLSAIVDTYGRITGSLALDAVGVVDSYLPSPRDPFWGRPPGWIQTVLILLTLLAASVGLILYSRRRFH.

6 helical membrane-spanning segments follow: residues 37–57 (IFVAGFVSFPVLVWLIDGAIA), 75–95 (WWFGFGYFVSGLWWIGTALLV), 106–126 (LAVLGLPAFLALFYAFAAMIA), 128–148 (LLWSDGLGRILAFAFGFALAE), 179–199 (VIGLVGMSALAVFVFAAPALL), and 207–227 (TGIGLAIFLALAHVGFGAWTL). The CN hydrolase domain occupies 245 to 494 (VQPSIAQAMK…VGVVDSYLPS (250 aa)). Glutamate 289 serves as the catalytic Proton acceptor. Lysine 353 is an active-site residue. Cysteine 406 serves as the catalytic Nucleophile. The helical transmembrane segment at 505–525 (GWIQTVLILLTLLAASVGLIL) threads the bilayer.

This sequence belongs to the CN hydrolase family. Apolipoprotein N-acyltransferase subfamily.

It is found in the cell inner membrane. The enzyme catalyses N-terminal S-1,2-diacyl-sn-glyceryl-L-cysteinyl-[lipoprotein] + a glycerophospholipid = N-acyl-S-1,2-diacyl-sn-glyceryl-L-cysteinyl-[lipoprotein] + a 2-acyl-sn-glycero-3-phospholipid + H(+). It participates in protein modification; lipoprotein biosynthesis (N-acyl transfer). Its function is as follows. Catalyzes the phospholipid dependent N-acylation of the N-terminal cysteine of apolipoprotein, the last step in lipoprotein maturation. The protein is Apolipoprotein N-acyltransferase of Brucella melitensis biotype 1 (strain ATCC 23456 / CCUG 17765 / NCTC 10094 / 16M).